The primary structure comprises 397 residues: Acetate kinase (397 aa).

Mg(2+) is bound at residue Asn-7. Position 14 (Lys-14) interacts with ATP. Position 91 (Arg-91) interacts with substrate. Asp-148 (proton donor/acceptor) is an active-site residue. Residues 208–212 (HIGNG), 283–285 (DMR), and 331–335 (GVGEN) each bind ATP. Residue Glu-384 participates in Mg(2+) binding.

Belongs to the acetokinase family. In terms of assembly, homodimer. Requires Mg(2+) as cofactor. Mn(2+) serves as cofactor.

The protein localises to the cytoplasm. It carries out the reaction acetate + ATP = acetyl phosphate + ADP. Its pathway is metabolic intermediate biosynthesis; acetyl-CoA biosynthesis; acetyl-CoA from acetate: step 1/2. Functionally, catalyzes the formation of acetyl phosphate from acetate and ATP. Can also catalyze the reverse reaction. This Azobacteroides pseudotrichonymphae genomovar. CFP2 protein is Acetate kinase.